Here is a 667-residue protein sequence, read N- to C-terminus: 1-deoxy-D-xylulose-5-phosphate synthase (667 aa).

Thiamine diphosphate-binding positions include H73 and 113 to 115 (SHA). D145 contacts Mg(2+). Thiamine diphosphate contacts are provided by residues 146–147 (GA), N175, Y297, and E379. N175 provides a ligand contact to Mg(2+).

The protein belongs to the transketolase family. DXPS subfamily. In terms of assembly, homodimer. It depends on Mg(2+) as a cofactor. Thiamine diphosphate is required as a cofactor.

It carries out the reaction D-glyceraldehyde 3-phosphate + pyruvate + H(+) = 1-deoxy-D-xylulose 5-phosphate + CO2. Its pathway is metabolic intermediate biosynthesis; 1-deoxy-D-xylulose 5-phosphate biosynthesis; 1-deoxy-D-xylulose 5-phosphate from D-glyceraldehyde 3-phosphate and pyruvate: step 1/1. Functionally, catalyzes the acyloin condensation reaction between C atoms 2 and 3 of pyruvate and glyceraldehyde 3-phosphate to yield 1-deoxy-D-xylulose-5-phosphate (DXP). The chain is 1-deoxy-D-xylulose-5-phosphate synthase from Kocuria rhizophila (strain ATCC 9341 / DSM 348 / NBRC 103217 / DC2201).